Consider the following 426-residue polypeptide: Serine--tRNA ligase (426 aa).

The segment at 36–66 (KRKHLQERTQDLQSQRNTISKEIGQKKAKGE) is disordered. The span at 46 to 55 (DLQSQRNTIS) shows a compositional bias: polar residues. 233–235 (TAE) contributes to the L-serine binding site. 264–266 (RSE) provides a ligand contact to ATP. Glu287 is a binding site for L-serine. An ATP-binding site is contributed by 351–354 (EISS). Ser387 lines the L-serine pocket.

Belongs to the class-II aminoacyl-tRNA synthetase family. Type-1 seryl-tRNA synthetase subfamily. As to quaternary structure, homodimer. The tRNA molecule binds across the dimer.

The protein resides in the cytoplasm. The enzyme catalyses tRNA(Ser) + L-serine + ATP = L-seryl-tRNA(Ser) + AMP + diphosphate + H(+). It carries out the reaction tRNA(Sec) + L-serine + ATP = L-seryl-tRNA(Sec) + AMP + diphosphate + H(+). Its pathway is aminoacyl-tRNA biosynthesis; selenocysteinyl-tRNA(Sec) biosynthesis; L-seryl-tRNA(Sec) from L-serine and tRNA(Sec): step 1/1. Functionally, catalyzes the attachment of serine to tRNA(Ser). Is also able to aminoacylate tRNA(Sec) with serine, to form the misacylated tRNA L-seryl-tRNA(Sec), which will be further converted into selenocysteinyl-tRNA(Sec). This chain is Serine--tRNA ligase, found in Francisella tularensis subsp. tularensis (strain FSC 198).